Reading from the N-terminus, the 21-residue chain is Nigrocin-2JDa (21 aa).

The cysteines at positions 15 and 21 are disulfide-linked.

Expressed by the skin glands.

The protein localises to the secreted. Its function is as follows. Has antibacterial activity against E.coli ATCC 25992 (MIC=16 uM), E.coli CIB 84492 (MIC=16 uM), S.aureus ATCC 25923 (MIC=16 uM) and S.aureus CIB 85462 (MIC=8 uM). Has antifungal activity against C.albicans (MIC=63 uM). Has hemolytic activity against rabbit erythrocytes. In Odorrana jingdongensis (Jingdong frog), this protein is Nigrocin-2JDa.